A 398-amino-acid polypeptide reads, in one-letter code: Phospholipase C (398 aa).

An N-terminal signal peptide occupies residues 1–28 (MKRKICKALICATLATSLWAGASTKVYA). Residues W29, H39, D84, H96, H154, D158, H164, H176, and E180 each coordinate Zn(2+). The Zn-dependent PLC domain maps to 29-278 (WDGKIDGTGT…HDVSEGNDPS (250 aa)). A linker region spans residues 275–283 (NDPSVGKNV). The PLAT domain occupies 284-398 (KELVAYISTS…ISGNSTYNIK (115 aa)). 11 residues coordinate Ca(2+): D297, G299, T300, D301, D321, N322, G324, N325, D326, D364, and A365.

The protein belongs to the bacterial zinc-metallophospholipase C family. Ca(2+) is required as a cofactor. Zn(2+) serves as cofactor.

The protein resides in the secreted. The enzyme catalyses a 1,2-diacyl-sn-glycero-3-phosphocholine + H2O = phosphocholine + a 1,2-diacyl-sn-glycerol + H(+). Its function is as follows. Bacterial hemolysins are exotoxins that attack blood cell membranes and cause cell rupture. Constitutes an essential virulence factor in gas gangrene. Binds to eukaryotic membranes where it hydrolyzes both phosphatidylcholine and sphingomyelin. The diacylglycerol produced can activate both the arachidonic acid pathway, leading to modulation of the inflammatory response cascade and thrombosis, and protein kinase C, leading to activation of eukaryotic phospholipases and further membrane damage. Acts on human and mouse erythrocytes, but not on rabbit or horse erythrocytes. The polypeptide is Phospholipase C (plc) (Clostridium perfringens (strain 13 / Type A)).